A 283-amino-acid polypeptide reads, in one-letter code: Cuticle collagen 49 (283 aa).

An N-terminal signal peptide occupies residues 1–19 (MWKFVIGSVSTAAFFVSVC). The segment at 90-283 (EPTKNCPAGP…GYCTCPPRTA (194 aa)) is disordered. Over residues 127–139 (VVIHDMPNPKECI) the composition is skewed to basic and acidic residues. Positions 143–155 (AGPPGPPGPPGPL) are enriched in pro residues. Residues 185–204 (QGPPGSAGRAGPRGQAGQPG) show a composition bias toward low complexity. The Collagen-like domain occupies 213–271 (GRPGPQGPLGEPGAQGEPGVDGKDGALGAPGRKAENGRPGKRGKDGVAGVPGTRGKEGE). Positions 244–257 (RKAENGRPGKRGKD) are enriched in basic and acidic residues.

The protein belongs to the cuticular collagen family. As to quaternary structure, collagen polypeptide chains are complexed within the cuticle by disulfide bonds and other types of covalent cross-links.

In terms of biological role, probable cuticular collagen-like protein. Nematode cuticles are composed largely of collagen-like proteins. The cuticle functions both as an exoskeleton and as a barrier to protect the worm from its environment. Acts downstream of the Wnt signaling pathway, perhaps in the formation of the adult cuticle. This Caenorhabditis elegans protein is Cuticle collagen 49.